A 372-amino-acid chain; its full sequence is 4-hydroxy-3-methylbut-2-en-1-yl diphosphate synthase (flavodoxin) (372 aa).

4 residues coordinate [4Fe-4S] cluster: cysteine 270, cysteine 273, cysteine 305, and glutamate 312.

This sequence belongs to the IspG family. It depends on [4Fe-4S] cluster as a cofactor.

The catalysed reaction is (2E)-4-hydroxy-3-methylbut-2-enyl diphosphate + oxidized [flavodoxin] + H2O + 2 H(+) = 2-C-methyl-D-erythritol 2,4-cyclic diphosphate + reduced [flavodoxin]. Its pathway is isoprenoid biosynthesis; isopentenyl diphosphate biosynthesis via DXP pathway; isopentenyl diphosphate from 1-deoxy-D-xylulose 5-phosphate: step 5/6. In terms of biological role, converts 2C-methyl-D-erythritol 2,4-cyclodiphosphate (ME-2,4cPP) into 1-hydroxy-2-methyl-2-(E)-butenyl 4-diphosphate. The protein is 4-hydroxy-3-methylbut-2-en-1-yl diphosphate synthase (flavodoxin) of Salmonella choleraesuis (strain SC-B67).